Consider the following 994-residue polypeptide: MVSNPSSSTEVWINSKTSIKFPFEPYECQRIFMKNVIDVLDMKLDAALESPTGTGKTLSLLCSTLAWVQKLKESKPMDFATWQSSGAGGAEKTEDKLKNSFIPTIFYASRTHSQLEQVVHELNRTEYKWVKTTILGSREHFCINQKVKKIKESNRQAHVCRGLVSKRSCHYYNKFDALTTDKANEILEKGEAMDIEDFVKIGTQNSICPYFMSRQRSETAELILLPYNYIIDPKMRRRYKLDLKNSIVIFDEAHNLESICESNASAELSSTSIALCIEELKKVLALLVEEEENAREEADNETEAFGTQKIDLTKKLIENLRTEDLMALLEKVFTLEENFDKLFESDQLKSVPPLDGKASDGAILLETLANSGCDGNSVERFVDVLRDAISYLLSKNEEVSLTEKGDGMESVADFLLSIYSTHAQEVAAAVGDEHIKLADRVDPATVARNCKLYIRKDSGKLVIKYFCFQASISMRMLKMRGVRNVLLASGTLSPIQAFTYNMGLNFGAILENEHALKQVPVLTSIVTRGKHGGLVGSFQNRKNIEYVSDVGESLIRVMETTPQGVLVFFSSYSQMDELVEVWKKTKRGASDSPETFWEKMEKTKKIAVEPRAKEQLAAVRLRYTQGVSEPHGAALLAVCRGKVSEGIDFCDAESRAVIIVGIPYPPIHDERVVLKKMYLDDLMGRKDLTNEPQSSRDWYQMEAFRAVNQAIGRVLRHKNDFGTVVLIDTRYASAKPEMFPKWLRNTISRCDSNNCALKTARFFKERGHLIENSKSEYIKKQAKTCKSFRQVKSQSASNPKDDITDITLEDMFSPANMKIEKKEKIEPRPIKYDSSSSSVFSLPTNEDELKVKKWEQENDSQTNVSSSSDLNKRKYKAETPGNSSGQHVVSGSEPPKKRKMVLLTRETLPEKYQNALNIPTSELTKGMSLDNQKQFVATLKGYKATNMEWQEVFQRLHQIFIPDRPDLFISCSNILRSEDKMKYIRRSLGMKINY.

Residues 15 to 324 form the Helicase ATP-binding domain; sequence SKTSIKFPFE…KLIENLRTED (310 aa). 50–57 serves as a coordination point for ATP; that stretch reads SPTGTGKT. Residues C142, C160, C169, and C208 each coordinate [4Fe-4S] cluster. A DEAH box motif is present at residues 251-254; the sequence is DEAH. Residues 818–831 show a composition bias toward basic and acidic residues; that stretch reads KIEKKEKIEPRPIK. Residues 818–896 form a disordered region; it reads KIEKKEKIEP…HVVSGSEPPK (79 aa). The segment covering 833–844 has biased composition (polar residues); that stretch reads DSSSSSVFSLPT. Residues 847-856 are compositionally biased toward basic and acidic residues; that stretch reads DELKVKKWEQ. Composition is skewed to polar residues over residues 859 to 869 and 880 to 889; these read DSQTNVSSSSD and PGNSSGQHVV.

It belongs to the helicase family. RAD3/XPD subfamily.

It is found in the nucleus. It catalyses the reaction ATP + H2O = ADP + phosphate + H(+). A probable ATP-dependent DNA helicase implicated in DNA repair and the maintenance of genomic stability. Acts as an anti-recombinase to counteract toxic recombination and limit crossover during meiosis. Regulates meiotic recombination and crossover homeostasis by physically dissociating strand invasion events and thereby promotes noncrossover repair by meiotic synthesis dependent strand annealing (SDSA) as well as disassembly of D loop recombination intermediates. The sequence is that of Regulator of telomere elongation helicase 1 homolog from Caenorhabditis briggsae.